The following is a 368-amino-acid chain: MARRSVSIFNRLLANPPSPFTSLSRSITYMPRPGDGAPRTVTLIPGDGIGPLVTGAVEQVMEAMHAPVHFERYEVLGNMRKVPEEVIESVKRNKVCLKGGLATPVGGGVSSLNMQLRKELDIFASLVNCINVPGLVTRHENVDIVVIRENTEGEYSGLEHEVVPGVVESLKVITKFCSERIARYAFEYAYLNNRKKVTAVHKANIMKLADGLFLESCREVAKHYSGITYNEIIVDNCCMQLVAKPEQFDVMVTPNLYGNLIANTAAGIAGGTGVMPGGNVGAEHAIFEQGASAGNVGNDKMVEQKKANPVALLLSSAMMLRHLRFPTFADRLETAVKQVIKEGKYRTKDLGGDCTTQEVVDAVIAALE.

Residues 1–26 (MARRSVSIFNRLLANPPSPFTSLSRS) constitute a mitochondrion transit peptide.

It belongs to the isocitrate and isopropylmalate dehydrogenases family. In terms of assembly, heterooligomer of catalytic and regulatory subunits. Interacts with 14-3-3-like proteins GRF1 GRF3 and GRF8. As to expression, mainly expressed at a low level in pollen.

It is found in the mitochondrion. Its function is as follows. Performs an essential role in the oxidative function of the citric acid cycle. In Arabidopsis thaliana (Mouse-ear cress), this protein is Isocitrate dehydrogenase [NAD] regulatory subunit 3, mitochondrial (IDH3).